The sequence spans 248 residues: PF03932 family protein CutC (248 aa).

This sequence belongs to the CutC family. In terms of assembly, homodimer.

Its subcellular location is the cytoplasm. In Shigella dysenteriae serotype 1 (strain Sd197), this protein is PF03932 family protein CutC.